The chain runs to 60 residues: uncharacterized protein (60 aa).

This is an uncharacterized protein from Dictyostelium discoideum (Social amoeba).